The chain runs to 270 residues: tRNA (guanine-N(1)-)-methyltransferase (270 aa).

S-adenosyl-L-methionine-binding positions include glycine 117 and 137 to 142; that span reads IGDYVL.

This sequence belongs to the RNA methyltransferase TrmD family. Homodimer.

It localises to the cytoplasm. The catalysed reaction is guanosine(37) in tRNA + S-adenosyl-L-methionine = N(1)-methylguanosine(37) in tRNA + S-adenosyl-L-homocysteine + H(+). In terms of biological role, specifically methylates guanosine-37 in various tRNAs. This Heliobacterium modesticaldum (strain ATCC 51547 / Ice1) protein is tRNA (guanine-N(1)-)-methyltransferase.